A 192-amino-acid chain; its full sequence is UPF0149 protein YgfB (192 aa).

Belongs to the UPF0149 family.

In Salmonella typhi, this protein is UPF0149 protein YgfB.